A 493-amino-acid polypeptide reads, in one-letter code: Glutamate--tRNA ligase (493 aa).

Residues proline 10–threonine 20 carry the 'HIGH' region motif. The short motif at lysine 251–arginine 255 is the 'KMSKS' region element. An ATP-binding site is contributed by lysine 254.

The protein belongs to the class-I aminoacyl-tRNA synthetase family. Glutamate--tRNA ligase type 1 subfamily. As to quaternary structure, monomer.

It localises to the cytoplasm. It carries out the reaction tRNA(Glu) + L-glutamate + ATP = L-glutamyl-tRNA(Glu) + AMP + diphosphate. Catalyzes the attachment of glutamate to tRNA(Glu) in a two-step reaction: glutamate is first activated by ATP to form Glu-AMP and then transferred to the acceptor end of tRNA(Glu). This Pseudomonas entomophila (strain L48) protein is Glutamate--tRNA ligase.